The primary structure comprises 184 residues: LPS-assembly lipoprotein LptE (184 aa).

Residues 1–19 (MRHRLFTLVLGLAVLITAG) form the signal peptide. Residue cysteine 20 is the site of N-palmitoyl cysteine attachment. Cysteine 20 carries the S-diacylglycerol cysteine lipid modification.

It belongs to the LptE lipoprotein family. Component of the lipopolysaccharide transport and assembly complex. Interacts with LptD.

The protein resides in the cell outer membrane. Its function is as follows. Together with LptD, is involved in the assembly of lipopolysaccharide (LPS) at the surface of the outer membrane. Required for the proper assembly of LptD. Binds LPS and may serve as the LPS recognition site at the outer membrane. This chain is LPS-assembly lipoprotein LptE, found in Pectobacterium atrosepticum (strain SCRI 1043 / ATCC BAA-672) (Erwinia carotovora subsp. atroseptica).